The primary structure comprises 157 residues: Large ribosomal subunit protein uL10 (157 aa).

This sequence belongs to the universal ribosomal protein uL10 family. In terms of assembly, part of the ribosomal stalk of the 50S ribosomal subunit. The N-terminus interacts with L11 and the large rRNA to form the base of the stalk. The C-terminus forms an elongated spine to which L12 dimers bind in a sequential fashion forming a multimeric L10(L12)X complex.

Functionally, forms part of the ribosomal stalk, playing a central role in the interaction of the ribosome with GTP-bound translation factors. The polypeptide is Large ribosomal subunit protein uL10 (Campylobacter hominis (strain ATCC BAA-381 / DSM 21671 / CCUG 45161 / LMG 19568 / NCTC 13146 / CH001A)).